We begin with the raw amino-acid sequence, 259 residues long: Pycsar effector protein RsmPycTIR (259 aa).

1–120 (MVGGDEVIAN…RRVHEDFSGR (120 aa)) is a binding site for a nucleoside 3',5'-cyclic phosphate. Residues 126–229 (LATGISRRTS…AEFQYQISSS (104 aa)) are TIR-like. 3 consecutive transmembrane segments (helical) span residues 136 to 156 (GWNWTVISLTAGVLSAAAIWY), 169 to 189 (VLLPLVVGLTIFLLTLLADPV), and 234 to 254 (QATALLAPIVLGALAAYLFWI).

It is found in the cell inner membrane. The catalysed reaction is NAD(+) + H2O = ADP-D-ribose + nicotinamide + H(+). Its function is as follows. Pycsar (pyrimidine cyclase system for antiphage resistance) provides immunity against bacteriophage. The pyrimidine cyclase (PycC) synthesizes cyclic nucleotides in response to infection; these serve as specific second messenger signals. The signals activate the adjacent effector, leading to bacterial cell death and abortive phage infection. A clade B Pycsar system. Functionally, the effector gene of a two-gene Pycsar system. Expression of this and adjacent uridylate cyclase RsmPycC (AC A0A1V0HUX5) probably confers resistance to bacteriophage. The genes are probably only expressed in response to bacteriophage infection. Probably only responds to cUMP (produced by its cognate NTP cyclase), it may act by degrading NAD(+) and/or by impairing membrane integrity. This Rhodovulum sp. (strain MB263) protein is Pycsar effector protein RsmPycTIR.